The sequence spans 150 residues: 1,4-dihydroxy-2-naphthoyl-CoA hydrolase (150 aa).

The active site involves aspartate 19.

It belongs to the 4-hydroxybenzoyl-CoA thioesterase family. DHNA-CoA hydrolase subfamily.

The catalysed reaction is 1,4-dihydroxy-2-naphthoyl-CoA + H2O = 1,4-dihydroxy-2-naphthoate + CoA + H(+). The protein operates within cofactor biosynthesis; phylloquinone biosynthesis. It functions in the pathway quinol/quinone metabolism; 1,4-dihydroxy-2-naphthoate biosynthesis; 1,4-dihydroxy-2-naphthoate from chorismate: step 7/7. In terms of biological role, catalyzes the hydrolysis of 1,4-dihydroxy-2-naphthoyl-CoA (DHNA-CoA) to 1,4-dihydroxy-2-naphthoate (DHNA), a reaction involved in phylloquinone (vitamin K1) biosynthesis. This chain is 1,4-dihydroxy-2-naphthoyl-CoA hydrolase, found in Prochlorococcus marinus (strain MIT 9312).